The primary structure comprises 224 residues: Deoxyribose-phosphate aldolase (224 aa).

Catalysis depends on aspartate 92, which acts as the Proton donor/acceptor. Lysine 155 acts as the Schiff-base intermediate with acetaldehyde in catalysis. Lysine 184 acts as the Proton donor/acceptor in catalysis.

This sequence belongs to the DeoC/FbaB aldolase family. DeoC type 1 subfamily.

The protein resides in the cytoplasm. It catalyses the reaction 2-deoxy-D-ribose 5-phosphate = D-glyceraldehyde 3-phosphate + acetaldehyde. It functions in the pathway carbohydrate degradation; 2-deoxy-D-ribose 1-phosphate degradation; D-glyceraldehyde 3-phosphate and acetaldehyde from 2-deoxy-alpha-D-ribose 1-phosphate: step 2/2. Its function is as follows. Catalyzes a reversible aldol reaction between acetaldehyde and D-glyceraldehyde 3-phosphate to generate 2-deoxy-D-ribose 5-phosphate. This Clostridium perfringens (strain 13 / Type A) protein is Deoxyribose-phosphate aldolase.